The sequence spans 326 residues: Tagatose 1,6-diphosphate aldolase (326 aa).

It belongs to the aldolase LacD family.

It carries out the reaction D-tagatofuranose 1,6-bisphosphate = D-glyceraldehyde 3-phosphate + dihydroxyacetone phosphate. It functions in the pathway carbohydrate metabolism; D-tagatose 6-phosphate degradation; D-glyceraldehyde 3-phosphate and glycerone phosphate from D-tagatose 6-phosphate: step 2/2. The sequence is that of Tagatose 1,6-diphosphate aldolase from Staphylococcus aureus (strain bovine RF122 / ET3-1).